A 668-amino-acid polypeptide reads, in one-letter code: WD repeat-containing protein 48 homolog (668 aa).

WD repeat units follow at residues 26 to 65 (QHRNGVNALQLDANNGKLYSAGRDAIIRVWNTRTDSSEKY), 71 to 110 (HHNDWVNDIVLCCNGRNLISASCDTTVKVWNAQKGFCMST), 113 to 152 (THRDYVQALAYAKDREQVASAGLDKAIFLWDVNTLTALTA), 164 to 203 (GSKDSIYSLAMNPSGTVIVSGSTENILRIWDPRTCMRRMK), 206 to 245 (GHTENVRCLVVSPDGNQVVSGSSDGTIKVWNLGQQRCVQT), 248 to 287 (VHKEGVWSLLMSENFQYIISGSRDRNIIVTEMRNPSNKTL), 290 to 329 (EEQAPVLSLGYNIDKTGVWATTWNSDIRCWKLPMYDRCTL), and 350 to 389 (KGGAAIKECAVLNDKRYIITKDSQDQVVVYDVLRVVKKEQ). Residues 592 to 616 (ETTPSGGNANNSLQNSQSDANSEGS) are disordered.

The protein belongs to the WD repeat WDR48 family. In terms of assembly, catalytic component of the Usp12-46 deubiquitylase complex consisting of Usp12-46, Wdr20 and Uaf1; regulatory subunit that, together wtih Wdr20, stabilizes Usp12-46. The Usp12-46 deubiquitylase complex associates with arr/arrow; the interaction leads to deubiquitination and stabilization of arr/arrow.

Functionally, regulatory component of the Usp12-46 deubiquitylase complex. activates deubiquitination by increasing the catalytic turnover without increasing the affinity of deubiquitinating enzymes for the substrate. The complex deubiquitylates the wg/wingless-signaling receptor arr/arrow, which stabilizes the receptor and increases its concentration at the cell surface; this enhances the sensitivity of cells to wg/wingless-signal stimulation. This increases the amplitude and spatial range of the signaling response to the wg/wingless morphogen gradient, facilitating the precise concentration-dependent regulation of its target genes. Together with Wdr20 and Usp12-46 required for wg/wingless-mediated signaling in the wing imaginal disc and for wg/wingless-dependent regulation of intestinal stem cell proliferation. In Drosophila melanogaster (Fruit fly), this protein is WD repeat-containing protein 48 homolog.